The chain runs to 418 residues: Cyclin-dependent kinase 15 (418 aa).

Residues 84 to 369 enclose the Protein kinase domain; it reads YLNLEKLGEG…AQDALLHPYF (286 aa). ATP is bound by residues 90-98 and K113; that span reads LGEGTYATV. D205 functions as the Proton acceptor in the catalytic mechanism.

This sequence belongs to the protein kinase superfamily. CMGC Ser/Thr protein kinase family. CDC2/CDKX subfamily. The cofactor is Mg(2+).

It carries out the reaction L-seryl-[protein] + ATP = O-phospho-L-seryl-[protein] + ADP + H(+). It catalyses the reaction L-threonyl-[protein] + ATP = O-phospho-L-threonyl-[protein] + ADP + H(+). Its function is as follows. Serine/threonine-protein kinase involved in the control of the eukaryotic cell cycle, whose activity is controlled by an associated cyclin. The protein is Cyclin-dependent kinase 15 (cdk15) of Danio rerio (Zebrafish).